A 229-amino-acid polypeptide reads, in one-letter code: UPF0173 metal-dependent hydrolase RD1_1994 (229 aa).

It belongs to the UPF0173 family.

The polypeptide is UPF0173 metal-dependent hydrolase RD1_1994 (Roseobacter denitrificans (strain ATCC 33942 / OCh 114) (Erythrobacter sp. (strain OCh 114))).